Here is a 368-residue protein sequence, read N- to C-terminus: Aminomethyltransferase (368 aa).

This sequence belongs to the GcvT family. The glycine cleavage system is composed of four proteins: P, T, L and H.

It catalyses the reaction N(6)-[(R)-S(8)-aminomethyldihydrolipoyl]-L-lysyl-[protein] + (6S)-5,6,7,8-tetrahydrofolate = N(6)-[(R)-dihydrolipoyl]-L-lysyl-[protein] + (6R)-5,10-methylene-5,6,7,8-tetrahydrofolate + NH4(+). In terms of biological role, the glycine cleavage system catalyzes the degradation of glycine. In Xylella fastidiosa (strain M12), this protein is Aminomethyltransferase.